A 156-amino-acid polypeptide reads, in one-letter code: Small ribosomal subunit protein uS7cz/uS7cy (156 aa).

The protein belongs to the universal ribosomal protein uS7 family. As to quaternary structure, part of the 30S ribosomal subunit.

The protein localises to the plastid. It localises to the chloroplast. Its function is as follows. One of the primary rRNA binding proteins, it binds directly to 16S rRNA where it nucleates assembly of the head domain of the 30S subunit. The sequence is that of Small ribosomal subunit protein uS7cz/uS7cy (rps7-A) from Saccharum hybrid (Sugarcane).